Here is a 422-residue protein sequence, read N- to C-terminus: Roquefortine prenyltransferase roqD (422 aa).

E100 lines the substrate pocket. Residues R113, K200, and Y202 each contribute to the dimethylallyl diphosphate site. A substrate-binding site is contributed by Y204. The dimethylallyl diphosphate site is built by K268, Y270, Y353, Y416, and Y420.

Belongs to the tryptophan dimethylallyltransferase family.

Its pathway is alkaloid biosynthesis. Its function is as follows. Roquefortine prenyltransferase; part of the gene cluster that mediates the biosynthesis of the mycotoxins roquefortine C and meleagrin. The first stage is catalyzed by the dipeptide synthase roqA which condenses histidine and tryptophan to produce histidyltryptophanyldiketopiperazine (HTD). HTD is then converted to roquefortine C through two possible pathways. In the first pathway, prenyltransferase roqD transforms HTD to the intermediate roquefortine D, which is in turn converted to roquefortine C by the cytochrome P450 monooxygenase roqR. In the second pathway, HTD is first converted to the intermediate dehydrohistidyltryptophanyldi-ketopiperazine (DHTD) by roqR which is then prenylated by roqD to form roquefortine C. Roquefortine C can be further transformed to meleagrin via three more reactions including oxydation to glandicolin A by roqM, which is further reduced to glandicoline B by roqO. Finally, glandicoline B is converted to meleagrin by the glandicoline B O-methyltransferase roqN. More studies identified further branching and additional metabolites produced by the roquefortine/meleagrin cluster, including roquefortine F, roquefortine L, roquefortine M, roquefortine N and neoxaline. In Penicillium rubens (strain ATCC 28089 / DSM 1075 / NRRL 1951 / Wisconsin 54-1255) (Penicillium chrysogenum), this protein is Roquefortine prenyltransferase roqD.